Consider the following 315-residue polypeptide: Cytochrome f (315 aa).

Positions 1-30 (MRTFLKFSTLVSKGVLVLVCSFFLTASSNA) are cleaved as a signal peptide. The heme site is built by Y31, C51, C54, and H55. Residues 281–300 (IQGLLVFFLFVLLAQVFLVL) traverse the membrane as a helical segment.

This sequence belongs to the cytochrome f family. As to quaternary structure, the 4 large subunits of the cytochrome b6-f complex are cytochrome b6, subunit IV (17 kDa polypeptide, petD), cytochrome f and the Rieske protein, while the 4 small subunits are PetG, PetL, PetM and PetN. The complex functions as a dimer. Requires heme as cofactor.

Its subcellular location is the plastid. It localises to the chloroplast thylakoid membrane. Component of the cytochrome b6-f complex, which mediates electron transfer between photosystem II (PSII) and photosystem I (PSI), cyclic electron flow around PSI, and state transitions. This is Cytochrome f (petA) from Chlorella vulgaris (Green alga).